We begin with the raw amino-acid sequence, 244 residues long: Tetraspanin-2A (244 aa).

Residues 1–22 lie on the Cytoplasmic side of the membrane; it reads MGIGYGASDEQLEKQIGCVKYT. A helical transmembrane segment spans residues 23-43; the sequence is LFCFNIVAWMISTALFALTVW. At 44–61 the chain is on the extracellular side; it reads LRAEPGFNDWLRILEAQS. Residues 62–82 traverse the membrane as a helical segment; it reads FYIGVYVLIGISIVMMAVSFL. Over 83–91 the chain is Cytoplasmic; it reads GCLSALMEN. Residues 92-112 traverse the membrane as a helical segment; sequence TLALFVFVGTQVFGFIAIVAG. The Extracellular portion of the chain corresponds to 113 to 206; it reads SAVLLQFSTI…TWFFEGKTGW (94 aa). The helical transmembrane segment at 207-227 threads the bilayer; sequence IVALAMTLGLLNVICAVMSFV. Residues 228 to 244 are Cytoplasmic-facing; the sequence is LVQAVKKEEEQASNYRR.

Belongs to the tetraspanin (TM4SF) family. As to quaternary structure, forms a complex with Ssk and mesh.

Its subcellular location is the apicolateral cell membrane. The protein resides in the cell junction. The protein localises to the septate junction. In terms of biological role, required for assembly of smooth septate junctions (sSJs), together with Ssk and mesh. Important for barrier function of the midgut epithelium. This Drosophila melanogaster (Fruit fly) protein is Tetraspanin-2A.